Here is a 269-residue protein sequence, read N- to C-terminus: Expansin-B9 (269 aa).

An N-terminal signal peptide occupies residues 1 to 24; that stretch reads MGSLANNIMVVGAVLAALVVGGSC. An N-linked (GlcNAc...) asparagine glycan is attached at Asn34. Residues 63–169 enclose the Expansin-like EG45 domain; sequence GGACGIKNVN…RRVRCKYPAG (107 aa). Intrachain disulfides connect Cys66/Cys94, Cys97/Cys164, and Cys102/Cys108. The Expansin-like CBD domain maps to 183–264; it reads NYVAVLVKFV…NWRPDAVYTS (82 aa).

It belongs to the expansin family. Expansin B subfamily. Expressed in anthers and pollen.

It is found in the secreted. Its subcellular location is the cell wall. The protein resides in the membrane. In terms of biological role, may aid fertilization by loosening the cell wall of the stigma and style, thereby facilitating penetration of the pollen tube. Acts selectively on grass cell walls, which are relatively poor in pectins and xyloglucans and rich in glucuronoarabinoxylans and (1-3),(1-4)-beta-D-glucans, when compared with cell walls of other angiosperms, including other monocots. The polypeptide is Expansin-B9 (EXPB9) (Zea mays (Maize)).